The following is a 179-amino-acid chain: uncharacterized protein (179 aa).

The signal sequence occupies residues 1–26 (MKKNMILFFGILKKLLICILKMEIKC).

This is an uncharacterized protein from Acheta domesticus (House cricket).